A 175-amino-acid polypeptide reads, in one-letter code: Large ribosomal subunit protein uL10 (175 aa).

The protein belongs to the universal ribosomal protein uL10 family. Part of the ribosomal stalk of the 50S ribosomal subunit. The N-terminus interacts with L11 and the large rRNA to form the base of the stalk. The C-terminus forms an elongated spine to which L12 dimers bind in a sequential fashion forming a multimeric L10(L12)X complex.

Forms part of the ribosomal stalk, playing a central role in the interaction of the ribosome with GTP-bound translation factors. The sequence is that of Large ribosomal subunit protein uL10 from Thermobifida fusca (strain YX).